Consider the following 108-residue polypeptide: Insulin (108 aa).

Residues 1–21 (MAVWLQAGALLVLLVVSSVST) form the signal peptide. Intrachain disulfides connect Cys30–Cys94, Cys42–Cys107, and Cys93–Cys98. Positions 54 to 84 (DVEPLLGFLPPKSAQETEVADFAFKDHAELI) are cleaved as a propeptide — c peptide.

The protein belongs to the insulin family. As to quaternary structure, heterodimer of a B chain and an A chain linked by two disulfide bonds.

It localises to the secreted. Functionally, insulin decreases blood glucose concentration. It increases cell permeability to monosaccharides, amino acids and fatty acids. It accelerates glycolysis, the pentose phosphate cycle, and glycogen synthesis in liver. The protein is Insulin (ins) of Danio rerio (Zebrafish).